A 356-amino-acid polypeptide reads, in one-letter code: tRNA-specific 2-thiouridylase MnmA 1 (356 aa).

ATP is bound by residues 8–15 and Met-34; that span reads GMSGGVDS. The Nucleophile role is filled by Cys-103. Cysteines 103 and 199 form a disulfide. Gly-127 lines the ATP pocket. An interaction with tRNA region spans residues 149-151; the sequence is KDQ. The active-site Cysteine persulfide intermediate is the Cys-199. The tract at residues 305–306 is interaction with tRNA; the sequence is RY.

It belongs to the MnmA/TRMU family.

It is found in the cytoplasm. The enzyme catalyses S-sulfanyl-L-cysteinyl-[protein] + uridine(34) in tRNA + AH2 + ATP = 2-thiouridine(34) in tRNA + L-cysteinyl-[protein] + A + AMP + diphosphate + H(+). In terms of biological role, catalyzes the 2-thiolation of uridine at the wobble position (U34) of tRNA, leading to the formation of s(2)U34. This is tRNA-specific 2-thiouridylase MnmA 1 from Clostridium botulinum (strain Loch Maree / Type A3).